Here is a 359-residue protein sequence, read N- to C-terminus: 3-dehydroquinate synthase (359 aa).

NAD(+) is bound by residues 71-76 (DGEAYK), 105-109 (GVIGD), 129-130 (TT), K142, and K151. Residues E184, H247, and H264 each coordinate Zn(2+).

Belongs to the sugar phosphate cyclases superfamily. Dehydroquinate synthase family. Requires Co(2+) as cofactor. Zn(2+) serves as cofactor. NAD(+) is required as a cofactor.

Its subcellular location is the cytoplasm. The catalysed reaction is 7-phospho-2-dehydro-3-deoxy-D-arabino-heptonate = 3-dehydroquinate + phosphate. Its pathway is metabolic intermediate biosynthesis; chorismate biosynthesis; chorismate from D-erythrose 4-phosphate and phosphoenolpyruvate: step 2/7. Catalyzes the conversion of 3-deoxy-D-arabino-heptulosonate 7-phosphate (DAHP) to dehydroquinate (DHQ). This Burkholderia ambifaria (strain ATCC BAA-244 / DSM 16087 / CCUG 44356 / LMG 19182 / AMMD) (Burkholderia cepacia (strain AMMD)) protein is 3-dehydroquinate synthase.